A 212-amino-acid chain; its full sequence is Fe/S biogenesis protein NfuA (212 aa).

2 residues coordinate [4Fe-4S] cluster: C169 and C172.

The protein belongs to the NfuA family. In terms of assembly, homodimer. [4Fe-4S] cluster is required as a cofactor.

Functionally, involved in iron-sulfur cluster biogenesis. Binds a 4Fe-4S cluster, can transfer this cluster to apoproteins, and thereby intervenes in the maturation of Fe/S proteins. Could also act as a scaffold/chaperone for damaged Fe/S proteins. In Acinetobacter baumannii (strain SDF), this protein is Fe/S biogenesis protein NfuA.